A 264-amino-acid polypeptide reads, in one-letter code: Thymidylate synthase (264 aa).

Residue Arg21 coordinates dUMP. His51 is a (6R)-5,10-methylene-5,6,7,8-tetrahydrofolate binding site. 126–127 (RR) provides a ligand contact to dUMP. The Nucleophile role is filled by Cys146. DUMP is bound by residues 166–169 (RSCD), Asn177, and 207–209 (HLY). Position 169 (Asp169) interacts with (6R)-5,10-methylene-5,6,7,8-tetrahydrofolate. Residue Ala263 coordinates (6R)-5,10-methylene-5,6,7,8-tetrahydrofolate.

The protein belongs to the thymidylate synthase family. Bacterial-type ThyA subfamily. Homodimer.

The protein localises to the cytoplasm. The enzyme catalyses dUMP + (6R)-5,10-methylene-5,6,7,8-tetrahydrofolate = 7,8-dihydrofolate + dTMP. The protein operates within pyrimidine metabolism; dTTP biosynthesis. Catalyzes the reductive methylation of 2'-deoxyuridine-5'-monophosphate (dUMP) to 2'-deoxythymidine-5'-monophosphate (dTMP) while utilizing 5,10-methylenetetrahydrofolate (mTHF) as the methyl donor and reductant in the reaction, yielding dihydrofolate (DHF) as a by-product. This enzymatic reaction provides an intracellular de novo source of dTMP, an essential precursor for DNA biosynthesis. The polypeptide is Thymidylate synthase (Enterobacter sp. (strain 638)).